Reading from the N-terminus, the 580-residue chain is Proline--tRNA ligase (580 aa).

The protein belongs to the class-II aminoacyl-tRNA synthetase family. ProS type 1 subfamily. In terms of assembly, homodimer.

The protein resides in the cytoplasm. It catalyses the reaction tRNA(Pro) + L-proline + ATP = L-prolyl-tRNA(Pro) + AMP + diphosphate. In terms of biological role, catalyzes the attachment of proline to tRNA(Pro) in a two-step reaction: proline is first activated by ATP to form Pro-AMP and then transferred to the acceptor end of tRNA(Pro). As ProRS can inadvertently accommodate and process non-cognate amino acids such as alanine and cysteine, to avoid such errors it has two additional distinct editing activities against alanine. One activity is designated as 'pretransfer' editing and involves the tRNA(Pro)-independent hydrolysis of activated Ala-AMP. The other activity is designated 'posttransfer' editing and involves deacylation of mischarged Ala-tRNA(Pro). The misacylated Cys-tRNA(Pro) is not edited by ProRS. This chain is Proline--tRNA ligase, found in Albidiferax ferrireducens (strain ATCC BAA-621 / DSM 15236 / T118) (Rhodoferax ferrireducens).